The sequence spans 220 residues: N-(5'-phosphoribosyl)anthranilate isomerase (220 aa).

The protein belongs to the TrpF family.

It catalyses the reaction N-(5-phospho-beta-D-ribosyl)anthranilate = 1-(2-carboxyphenylamino)-1-deoxy-D-ribulose 5-phosphate. It functions in the pathway amino-acid biosynthesis; L-tryptophan biosynthesis; L-tryptophan from chorismate: step 3/5. This chain is N-(5'-phosphoribosyl)anthranilate isomerase, found in Leptothrix cholodnii (strain ATCC 51168 / LMG 8142 / SP-6) (Leptothrix discophora (strain SP-6)).